Here is a 36-residue protein sequence, read N- to C-terminus: uncharacterized protein (36 aa).

A helical transmembrane segment spans residues 13–35; sequence SVILSPFPCCVLKSYLTVIYISF.

The protein resides in the host membrane. This is an uncharacterized protein from Pseudoalteromonas espejiana (Bacteriophage PM2).